A 181-amino-acid polypeptide reads, in one-letter code: Cytochrome b6-f complex iron-sulfur subunit (181 aa).

The interval Met-1–Glu-35 is disordered. Transmembrane regions (helical) follow at residues Val-53–Ile-73 and Gly-114–Val-134. The Rieske domain maps to Leu-85–Ile-178. The [2Fe-2S] cluster site is built by Cys-124, His-126, Cys-142, and His-145. Cys-129 and Cys-144 are joined by a disulfide.

It belongs to the Rieske iron-sulfur protein family. [2Fe-2S] cluster serves as cofactor.

It localises to the cell inner membrane. The catalysed reaction is 2 oxidized [plastocyanin] + a plastoquinol + 2 H(+)(in) = 2 reduced [plastocyanin] + a plastoquinone + 4 H(+)(out). Component of the green S-bacteria bc-complex which consists of the Rieske protein and cytochrome b subunit and which appears to lack a cytochrome c1-equivalent. This complex has a comparatively low redox potential. This chain is Cytochrome b6-f complex iron-sulfur subunit (petC), found in Chlorobaculum thiosulfatiphilum (Chlorobium limicola f.sp. thiosulfatophilum).